The following is an 84-amino-acid chain: Small ribosomal subunit protein uS17 (84 aa).

It belongs to the universal ribosomal protein uS17 family. Part of the 30S ribosomal subunit.

In terms of biological role, one of the primary rRNA binding proteins, it binds specifically to the 5'-end of 16S ribosomal RNA. This is Small ribosomal subunit protein uS17 from Clostridium botulinum (strain 657 / Type Ba4).